The sequence spans 223 residues: Probable transaldolase (223 aa).

Residue K83 is the Schiff-base intermediate with substrate of the active site.

It belongs to the transaldolase family. Type 3B subfamily.

Its subcellular location is the cytoplasm. The enzyme catalyses D-sedoheptulose 7-phosphate + D-glyceraldehyde 3-phosphate = D-erythrose 4-phosphate + beta-D-fructose 6-phosphate. The protein operates within carbohydrate degradation; pentose phosphate pathway; D-glyceraldehyde 3-phosphate and beta-D-fructose 6-phosphate from D-ribose 5-phosphate and D-xylulose 5-phosphate (non-oxidative stage): step 2/3. Transaldolase is important for the balance of metabolites in the pentose-phosphate pathway. This chain is Probable transaldolase, found in Myxococcus xanthus (strain DK1622).